A 360-amino-acid polypeptide reads, in one-letter code: Vignain (360 aa).

The N-terminal stretch at 1-20 (MQKFILLALSLALVLAITES) is a signal peptide. Positions 21–124 (FDFHEKELES…NGTFMYEKVD (104 aa)) are cleaved as a propeptide — activation peptide. N115 carries an N-linked (GlcNAc...) asparagine glycan. 3 cysteine pairs are disulfide-bonded: C147–C189, C181–C222, and C280–C332. The active site involves C150. Catalysis depends on residues H286 and N307. The tract at residues 341 to 360 (PIKKSSNNPSGIKSSPKDEL) is disordered. The segment covering 344–353 (KSSNNPSGIK) has biased composition (polar residues). The propeptide at 354–360 (SSPKDEL) is removed in mature form. The interval 357–360 (KDEL) is prevents secretion from ER.

It belongs to the peptidase C1 family. The potential N-glycosylation site at Asn-115 is not glycosylated.

The protein localises to the cytoplasmic vesicle. Low pH triggers activation of the protease and removal of the propeptide and the KDEL motif. Its function is as follows. Involved in programmed cell death. Shows a pronounced preference for hydrophobic residues in the P2 position and no obvious preference in the P1 position of the cleavage site. Accepts proline at the P1 and P1' positions. This chain is Vignain (CYSEP), found in Ricinus communis (Castor bean).